The chain runs to 209 residues: ATP phosphoribosyltransferase (209 aa).

Belongs to the ATP phosphoribosyltransferase family. Short subfamily. Heteromultimer composed of HisG and HisZ subunits.

It is found in the cytoplasm. The catalysed reaction is 1-(5-phospho-beta-D-ribosyl)-ATP + diphosphate = 5-phospho-alpha-D-ribose 1-diphosphate + ATP. Its pathway is amino-acid biosynthesis; L-histidine biosynthesis; L-histidine from 5-phospho-alpha-D-ribose 1-diphosphate: step 1/9. Catalyzes the condensation of ATP and 5-phosphoribose 1-diphosphate to form N'-(5'-phosphoribosyl)-ATP (PR-ATP). Has a crucial role in the pathway because the rate of histidine biosynthesis seems to be controlled primarily by regulation of HisG enzymatic activity. The polypeptide is ATP phosphoribosyltransferase (Caldicellulosiruptor saccharolyticus (strain ATCC 43494 / DSM 8903 / Tp8T 6331)).